The primary structure comprises 232 residues: Phosphate-specific transport system accessory protein PhoU homolog 1 (232 aa).

The protein belongs to the PhoU family. As to quaternary structure, homodimer.

It localises to the cytoplasm. Its function is as follows. Plays a role in the regulation of phosphate uptake. The chain is Phosphate-specific transport system accessory protein PhoU homolog 1 (phoU1) from Thermotoga maritima (strain ATCC 43589 / DSM 3109 / JCM 10099 / NBRC 100826 / MSB8).